Reading from the N-terminus, the 927-residue chain is MVQMTRRGFLLASGATLLGSSLSFRTLAAAADLSGAFEYSGWENFHRAQWSWDKKTRGAHLINCTGACPHFVYSKEGVVIREEQSKDIAPMTGIPEYNPRGCNKGECAHDYMYGPHRLKYPLIRVGERGEGKWRRASWDEALDMIADKVVDTIKNHAPDCISVYSPVPAVAPVSFSAGHRFAHYIGAHTHTFFDWYGDHPTGQTQTCGVQGDTAETADWFNSKYIILWGANPTQTRIPDAHFLSEAQLNGTKIVSIAPDFNSSAIKVDKWIHPQPGTDGALALSMAHVIIKEKLYDAHNLKEQTDLSYLVRSDTKRFLREADVVAGGSKDKFYLWDVRTGKPVIPKGCWGDQPEQKAPPVAFMGRNTNTFPKGYIDLGDIDPALEGKFKIQLLDGKSIEVRPVFEILKSRIMADNTPEKAAKITGVPAKSITELAREYATAKPSMIICGGGTQHWYYSDVLLRAMHLLTALTGSEGKNGGGLNHYIGQWKPTFLPGLVALAFPEGPAKQRFCQTTIWTYIHAEVNDQILNSDVDTEKYLREAFASRQMPNLPRDGRDPKVFIIYRGNWLNQAKGQKYVLRNLWPKLELVVDINIRMDSTALYSDVVLPSAHWYEKLDLNVTEEHTFINMTEPAIKPMWESKTDWQIFLALSKRVEMAANRKGYQKFNDEQFKWVRNLSNLWNQMTMDGKLAEDAAAAQYILDNAPHSKGITLDMLREKPQRFKANWTSSMKEGVPYTPFQNFVVDKKPWPTLTGRQQFYLDHETFFDMGVELPVYKAPIDADKYPFRFNSPHSRHSIHSTFKDSVLMLRLQRGGPSIDISSIDAKTLGIKDNDWVEVWNDHGKVICRVKIRSGEQRGRVSMWHTPELYMDLIEGGSQSVCPVRITPTHLVGNYGHLVFRPNYYGPGGTQRDVRVNMKRYIGATPMSF.

The tat-type signal signal peptide spans 1 to 31 (MVQMTRRGFLLASGATLLGSSLSFRTLAAAA). A 4Fe-4S Mo/W bis-MGD-type domain is found at 53–116 (DKKTRGAHLI…CAHDYMYGPH (64 aa)). [4Fe-4S] cluster is bound by residues H60, C64, C68, and C102. D198 lines the Mo-bis(molybdopterin guanine dinucleotide) pocket.

It belongs to the prokaryotic molybdopterin-containing oxidoreductase family. In terms of assembly, heterotrimer of alpha, beta and gamma subunits. [4Fe-4S] cluster serves as cofactor. The cofactor is Mo-bis(molybdopterin guanine dinucleotide). Predicted to be exported by the Tat system. The position of the signal peptide cleavage has not been experimentally proven.

Its subcellular location is the periplasm. Its function is as follows. Component of the perchlorate reductase that catalyzes the reduction of perchlorate to chlorite and allows anaerobic growth on perchlorate as the sole electron acceptor. Is probably also able to reduce chlorate to chlorite. The alpha subunit is likely the catalytic subunit. The protein is Perchlorate reductase subunit alpha (pcrA) of Dechloromonas aromatica (strain RCB).